The chain runs to 962 residues: Translation initiation factor IF-2 (962 aa).

The disordered stretch occupies residues 101-366 (AAQTQAAPVR…KKGKKLKLEP (266 aa)). The segment covering 117-141 (DAAKARAEAATRAEARAKAEAEAAK) has biased composition (basic and acidic residues). The segment covering 145–157 (AKAGNKAKPAAQK) has biased composition (low complexity). Over residues 173 to 216 (KPAEESKAEKAQADKMPSKKPAEPKEKAAKPKHERNGKGKDAKK) the composition is skewed to basic and acidic residues. Residues 219–234 (KPAAPAVPQPVVSAEE) are compositionally biased toward low complexity. The segment covering 235 to 269 (QAQRDEEARRAAALRAHQEALLKEKQERQARREAM) has biased composition (basic and acidic residues). Residues 270–283 (KQQAEQQAKAAQEA) show a composition bias toward low complexity. Over residues 338–354 (GGRDRNNARNGDDERVR) the composition is skewed to basic and acidic residues. Positions 462–631 (PRPPVVTVMG…LLEAEVLELT (170 aa)) constitute a tr-type G domain. Positions 471–478 (GHVDHGKT) are G1. GTP is bound at residue 471 to 478 (GHVDHGKT). The segment at 496–500 (GITQH) is G2. A G3 region spans residues 517–520 (DTPG). GTP-binding positions include 517–521 (DTPGH) and 571–574 (NKID). The segment at 571–574 (NKID) is G4. Residues 607–609 (SAK) are G5.

Belongs to the TRAFAC class translation factor GTPase superfamily. Classic translation factor GTPase family. IF-2 subfamily.

The protein localises to the cytoplasm. Functionally, one of the essential components for the initiation of protein synthesis. Protects formylmethionyl-tRNA from spontaneous hydrolysis and promotes its binding to the 30S ribosomal subunits. Also involved in the hydrolysis of GTP during the formation of the 70S ribosomal complex. The sequence is that of Translation initiation factor IF-2 from Neisseria meningitidis serogroup A / serotype 4A (strain DSM 15465 / Z2491).